Here is a 287-residue protein sequence, read N- to C-terminus: AA9 family lytic polysaccharide monooxygenase D (287 aa).

An N-terminal signal peptide occupies residues 1–17; sequence MKLSLLAAAAIAPMVSA. His18 contacts Cu(2+). A disulfide bridge connects residues Cys67 and Cys189. Residue His176 coordinates O2. Residue Tyr186 coordinates Cu(2+). Residues Asn220 and Asn250 are each glycosylated (N-linked (GlcNAc...) asparagine). The tract at residues 239 to 287 is disordered; that stretch reads TGGSGSSTGSYNESNAEDSNEYPYQKESGTCQSNFYRREHARDFSHRRA. The segment covering 274–287 has biased composition (basic and acidic residues); the sequence is YRREHARDFSHRRA.

It belongs to the polysaccharide monooxygenase AA9 family. Cu(2+) serves as cofactor.

Its subcellular location is the secreted. The catalysed reaction is [(1-&gt;4)-beta-D-glucosyl]n+m + reduced acceptor + O2 = 4-dehydro-beta-D-glucosyl-[(1-&gt;4)-beta-D-glucosyl]n-1 + [(1-&gt;4)-beta-D-glucosyl]m + acceptor + H2O.. In terms of biological role, lytic polysaccharide monooxygenase (LPMO) that depolymerizes crystalline and amorphous polysaccharides via the oxidation of scissile alpha- or beta-(1-4)-glycosidic bonds, yielding C1 oxidation products. Catalysis by LPMOs requires the reduction of the active-site copper from Cu(II) to Cu(I) by a reducing agent and H(2)O(2) or O(2) as a cosubstrate. Active on celluloseas as well as on the hemicellulose xyloglucan. Shows synergy with other hydrolases in degrading sorghum stover. In Emericella nidulans (strain FGSC A4 / ATCC 38163 / CBS 112.46 / NRRL 194 / M139) (Aspergillus nidulans), this protein is AA9 family lytic polysaccharide monooxygenase D.